Reading from the N-terminus, the 62-residue chain is Defensin BmKDfsin5 (62 aa).

Positions 1-24 (MKVIALFFLFAFIFCTLEVAIVEA) are cleaved as a signal peptide. 3 disulfide bridges follow: cysteine 28/cysteine 49, cysteine 35/cysteine 57, and cysteine 39/cysteine 59.

This sequence belongs to the invertebrate defensin family. Type 2 subfamily. As to expression, highly expressed in non-venom gland (hemolymph) and moderately expressed in venom gland.

The protein resides in the secreted. Functionally, antibacterial peptide active against Gram-positive bacteria (including S.aureus ATCC25923 (MIC=2.5 uM), M.luteus AB93113 (MIC=2.5 uM), and the antibiotic-resistant S.epidermidis PRSE P1389 (MIC=1.25 uM)), but not against Gram-negative bacteria (including E.coli and P.aeruginosa). Also has weak blocking activity on Kv1.1/KCNA1 (8.7% inhibition), Kv1.2/KCNA2 (10.2% inhibition), Kv1.3/KCNA3 (9.0% inhibition), KCa3.1/KCNN4/IK (9.1% inhibition), KCa2.3/KCNN3/SK3 (46.3% inhibition) and Kv11.1/KCNH2/ERG1 (16.9% inhibition) channels (tested at 1 uM). It inhibits potassium channel current by interacting with the pore region. This chain is Defensin BmKDfsin5, found in Olivierus martensii (Manchurian scorpion).